Reading from the N-terminus, the 1129-residue chain is Ubiquitin carboxyl-terminal hydrolase 7 (1129 aa).

The 141-residue stretch at 29–169 folds into the MATH domain; that stretch reads EGHLALDIER…DDVIRLRCRF (141 aa). In terms of domain architecture, USP spans 190-500; the sequence is IGLRNQGATC…SAYMLVYVRD (311 aa). Cysteine 199 serves as the catalytic Nucleophile. The active-site Proton acceptor is the histidine 439.

It belongs to the peptidase C19 family.

Its subcellular location is the nucleus. It catalyses the reaction Thiol-dependent hydrolysis of ester, thioester, amide, peptide and isopeptide bonds formed by the C-terminal Gly of ubiquitin (a 76-residue protein attached to proteins as an intracellular targeting signal).. In terms of biological role, hydrolase that deubiquitinates target proteins. In Caenorhabditis briggsae, this protein is Ubiquitin carboxyl-terminal hydrolase 7.